Consider the following 161-residue polypeptide: 6,7-dimethyl-8-ribityllumazine synthase (161 aa).

5-amino-6-(D-ribitylamino)uracil is bound by residues W31, 63–65, and 85–87; these read SFE and VVI. Residue 90 to 91 coordinates (2S)-2-hydroxy-3-oxobutyl phosphate; sequence GT. Catalysis depends on H93, which acts as the Proton donor. F118 provides a ligand contact to 5-amino-6-(D-ribitylamino)uracil. R132 contributes to the (2S)-2-hydroxy-3-oxobutyl phosphate binding site.

This sequence belongs to the DMRL synthase family.

The enzyme catalyses (2S)-2-hydroxy-3-oxobutyl phosphate + 5-amino-6-(D-ribitylamino)uracil = 6,7-dimethyl-8-(1-D-ribityl)lumazine + phosphate + 2 H2O + H(+). It participates in cofactor biosynthesis; riboflavin biosynthesis; riboflavin from 2-hydroxy-3-oxobutyl phosphate and 5-amino-6-(D-ribitylamino)uracil: step 1/2. Its function is as follows. Catalyzes the formation of 6,7-dimethyl-8-ribityllumazine by condensation of 5-amino-6-(D-ribitylamino)uracil with 3,4-dihydroxy-2-butanone 4-phosphate. This is the penultimate step in the biosynthesis of riboflavin. The chain is 6,7-dimethyl-8-ribityllumazine synthase from Arthrobacter sp. (strain FB24).